The primary structure comprises 63 residues: Alpha-conotoxin-like PuSG1.2 (63 aa).

Residues 1–21 (MRCLALLVVTLLLFTATATTG) form the signal peptide. A propeptide spanning residues 22 to 43 (ASNGMNAAASGEAPDSISLAVR) is cleaved from the precursor. Cystine bridges form between Cys-46/Cys-52 and Cys-47/Cys-60. Positions 48–50 (PDP) are lacks the Ser-Xaa-Pro motif that is crucial for potent interaction with nAChR.

This sequence belongs to the conotoxin A superfamily. As to expression, expressed by the salivary gland.

The protein resides in the secreted. Alpha-conopeptides-like may act on postsynaptic membranes, they bind to the nicotinic acetylcholine receptors (nAChR) and thus inhibit them. Has possibly a distinct nAChR binding mode from other alpha-conotoxins, due to a different three residue motif (lacks the Ser-Xaa-Pro motif). The chain is Alpha-conotoxin-like PuSG1.2 from Conus pulicarius (Flea-bitten cone).